Here is a 347-residue protein sequence, read N- to C-terminus: Quinolinate synthase (347 aa).

Iminosuccinate-binding residues include His47 and Ser68. Residue Cys113 coordinates [4Fe-4S] cluster. Iminosuccinate-binding positions include 139–141 (YAN) and Ser156. Cys200 is a [4Fe-4S] cluster binding site. Iminosuccinate-binding positions include 226 to 228 (HPE) and Thr243. Cys297 lines the [4Fe-4S] cluster pocket.

This sequence belongs to the quinolinate synthase family. Type 1 subfamily. [4Fe-4S] cluster is required as a cofactor.

It localises to the cytoplasm. The enzyme catalyses iminosuccinate + dihydroxyacetone phosphate = quinolinate + phosphate + 2 H2O + H(+). Its pathway is cofactor biosynthesis; NAD(+) biosynthesis; quinolinate from iminoaspartate: step 1/1. In terms of biological role, catalyzes the condensation of iminoaspartate with dihydroxyacetone phosphate to form quinolinate. This chain is Quinolinate synthase, found in Salmonella enteritidis PT4 (strain P125109).